The following is a 135-amino-acid chain: Large ribosomal subunit protein uL16c (135 aa).

This sequence belongs to the universal ribosomal protein uL16 family. Part of the 50S ribosomal subunit.

Its subcellular location is the plastid. The protein localises to the chloroplast. The chain is Large ribosomal subunit protein uL16c from Vitis vinifera (Grape).